The chain runs to 210 residues: MEESWGEPGETVEEPTSIEVQDIKLFGKWPLEGLNISDISLTDYIAVKDNHAVYLPHTAARYAVKRFRKAQCPIVERLTNSLMMHGRNNGKKLMAVRIVRHSFEIMHLLTGENPLQLVCEAISNSGPREDSTRIGRAGTVRRQAVDVAPLRRVNQAIWLLCTGAREASFRNIKSIAECLADELINAARGSSNSYAIKKKDELERVAKSNR.

Belongs to the universal ribosomal protein uS7 family.

The sequence is that of Small ribosomal subunit protein uS7 (RPS5) from Podocoryna carnea (Hydrozoan).